The sequence spans 209 residues: Uracil phosphoribosyltransferase (209 aa).

5-phospho-alpha-D-ribose 1-diphosphate contacts are provided by residues arginine 79, arginine 104, and 131–139 (DPMLATGHT). Uracil-binding positions include isoleucine 194 and 199–201 (GDA). Residue aspartate 200 participates in 5-phospho-alpha-D-ribose 1-diphosphate binding.

This sequence belongs to the UPRTase family. Requires Mg(2+) as cofactor.

It catalyses the reaction UMP + diphosphate = 5-phospho-alpha-D-ribose 1-diphosphate + uracil. It functions in the pathway pyrimidine metabolism; UMP biosynthesis via salvage pathway; UMP from uracil: step 1/1. Its activity is regulated as follows. Allosterically activated by GTP. Catalyzes the conversion of uracil and 5-phospho-alpha-D-ribose 1-diphosphate (PRPP) to UMP and diphosphate. The chain is Uracil phosphoribosyltransferase from Caulobacter sp. (strain K31).